Consider the following 591-residue polypeptide: Uncoordinated protein 58 (591 aa).

The tract at residues 1–24 is disordered; sequence MFFYSPNVAPQPSSTSHRRPTLTH. The chain crosses the membrane as a helical span at residues 184–204; sequence VILVSVLIGYLCLGAWILMLL. Asparagine 226 is a glycosylation site (N-linked (GlcNAc...) asparagine). 5 consecutive transmembrane segments (helical) span residues 289–309, 318–338, 400–420, 428–448, and 453–473; these read TFPT…YGEV, VFSV…AADI, PIGA…AMFI, FIHA…GDIV, and IFLS…TMCV.

This sequence belongs to the two pore domain potassium channel (TC 1.A.1.8) family.

Its subcellular location is the membrane. Functionally, has a role in mobility, possibly in the transport of potassium in muscles. The polypeptide is Uncoordinated protein 58 (Caenorhabditis elegans).